A 230-amino-acid polypeptide reads, in one-letter code: Protein FAM3A (230 aa).

Residues 1–33 (MRLAGPLRIVALIIIMGLTWILVTILLGGPGVG) form the signal peptide. Disulfide bonds link Cys59-Cys87 and Cys65-Cys222. Residues 68–226 (EHLSFRIVSG…LEMEGCIPRR (159 aa)) enclose the GG-type lectin domain.

Belongs to the FAM3 family.

It is found in the secreted. The polypeptide is Protein FAM3A (Fam3a) (Mus musculus (Mouse)).